We begin with the raw amino-acid sequence, 322 residues long: Myeloid-associated differentiation marker (322 aa).

Low complexity predominate over residues 1–18 (MPVTVTRTTITTTTTSSS). The disordered stretch occupies residues 1-21 (MPVTVTRTTITTTTTSSSGLG). Residue Ser-22 is modified to Phosphoserine. MARVEL domains follow at residues 31-163 (ALTQ…ARPG) and 168-319 (YMAT…HLVF). A run of 8 helical transmembrane segments spans residues 41-61 (LLQLVSTCVAFSLVASVGAWT), 70-90 (FTWCFCFSVTLIILIVELCGL), 101-121 (FPITFACYAALFCLSASIIYP), 137-157 (AIAATFFSCIACVAYATEVAW), 171-191 (TVPGLLKVLETFVACIIFAFI), 203-223 (LEWCVAVYAICFILAAIAILL), 239-259 (FLSGLALLSVLLYATALVLWP), and 294-314 (LAVAILTAINLLAYVADLVHS).

Belongs to the MAL family. In terms of tissue distribution, widely expressed. Not detected in thymus.

The protein localises to the membrane. This is Myeloid-associated differentiation marker (MYADM) from Homo sapiens (Human).